We begin with the raw amino-acid sequence, 154 residues long: Superoxide dismutase [Cu-Zn] (154 aa).

Cu cation contacts are provided by His-47, His-49, and His-64. A disulfide bridge connects residues Cys-58 and Cys-147. His-64, His-72, His-81, and Asp-84 together coordinate Zn(2+). A Cu cation-binding site is contributed by His-121. Over residues 125–136 the composition is skewed to basic and acidic residues; sequence DDLGKGGNEESL. Positions 125–144 are disordered; the sequence is DDLGKGGNEESLKTGNAGPR. Arg-144 is a substrate binding site.

The protein belongs to the Cu-Zn superoxide dismutase family. As to quaternary structure, homodimer. Cu cation serves as cofactor. It depends on Zn(2+) as a cofactor.

Its subcellular location is the cytoplasm. It carries out the reaction 2 superoxide + 2 H(+) = H2O2 + O2. Its function is as follows. Destroys radicals which are normally produced within the cells and which are toxic to biological systems. The polypeptide is Superoxide dismutase [Cu-Zn] (SOD1) (Cordyceps tenuipes (Entomopathogenic fungus)).